The chain runs to 890 residues: Translation initiation factor IF-2 (890 aa).

The segment at L45–Q304 is disordered. Polar residues predominate over residues S67–V81. Positions V92–D217 are enriched in basic and acidic residues. Basic residues predominate over residues G252 to N266. Residues K267–A280 show a composition bias toward basic and acidic residues. The tr-type G domain occupies P389–K558. The interval G398–T405 is G1. A GTP-binding site is contributed by G398 to T405. Residues G423–H427 are G2. Residues D444–G447 are G3. Residues D444–H448 and N498–D501 each bind GTP. Residues N498–D501 form a G4 region. The tract at residues S534–K536 is G5. Position 808 is an N6-acetyllysine (K808).

It belongs to the TRAFAC class translation factor GTPase superfamily. Classic translation factor GTPase family. IF-2 subfamily.

Its subcellular location is the cytoplasm. One of the essential components for the initiation of protein synthesis. Protects formylmethionyl-tRNA from spontaneous hydrolysis and promotes its binding to the 30S ribosomal subunits. Also involved in the hydrolysis of GTP during the formation of the 70S ribosomal complex. In Escherichia coli (strain 55989 / EAEC), this protein is Translation initiation factor IF-2.